The primary structure comprises 409 residues: Sulfide-quinone reductase (409 aa).

Residues 8 to 12, 34 to 35, and cysteine 129 contribute to the FAD site; these read GGRFG and NK. The active-site Cysteine persulfide intermediate is cysteine 178. Residues asparagine 271, aspartate 307, and glycine 317 each contribute to the FAD site. Cysteine 350 acts as the Cysteine persulfide intermediate in catalysis.

It belongs to the SQRD family. As to quaternary structure, monomer. Requires FAD as cofactor.

Its subcellular location is the membrane. The catalysed reaction is n a quinone + n hydrogen sulfide + n H(+) = polysulfur(n-2) + n a quinol. With respect to regulation, inhibited by the quinone analog 2-heptyl-4-hydroxyquinolone N-oxide (HQNO). Inactivated by iodoacetamide treatment. Inhibited by KCN. In terms of biological role, catalyzes the oxidation of sulfides, such as hydrogen sulfide, with the help of a quinone. Has the highest activity with caldariella quinone and decylubiquinone, and lower activity with naphtoquinones. Consecutive reaction cycles lead to the accumulation of a polysulfide product on the active site Cys residues; these products are released when they exceed a critical length, typically as cyclooctasulfur. In Acidianus ambivalens (Desulfurolobus ambivalens), this protein is Sulfide-quinone reductase.